A 693-amino-acid polypeptide reads, in one-letter code: Homeobox protein caupolican (693 aa).

6 disordered regions span residues 20 to 104 (TANT…PSRG), 288 to 331 (NKMT…PGNQ), 387 to 453 (AQSH…DCGI), 480 to 538 (YLGQ…PLSM), 561 to 627 (MHLP…SMHS), and 648 to 693 (YGHG…RSGS). A compositionally biased stretch (low complexity) spans 41–59 (ASLSPSGGSTATGLTAGPL). Positions 226–288 (LAARRKNATR…NARRRLKKEN (63 aa)) form a DNA-binding region, homeobox; TALE-type. Basic and acidic residues-rich tracts occupy residues 288 to 298 (NKMTWEPKNKT) and 308 to 317 (DDEKEKDAGD). 2 stretches are compositionally biased toward low complexity: residues 397–419 (HPQQ…QLQH) and 493–515 (QQLP…QQQQ). A compositionally biased stretch (basic residues) spans 516–527 (QHHHHPHHHHPH). Residues 609–627 (SSGGSSSSSGSSHSSSMHS) show a composition bias toward low complexity. Positions 651–675 (GHSHGHGHGHGHGLGHGHGLGHGHG) are enriched in basic residues.

It belongs to the TALE/IRO homeobox family.

It is found in the nucleus. Functionally, controls proneural and vein forming genes. Positive transcriptional controller of ac-sc (achaete-scute). May act as an activator that interacts with the transcriptional complex assembled on the ac and sc promoters and participates in transcription initiation. This Drosophila melanogaster (Fruit fly) protein is Homeobox protein caupolican (caup).